We begin with the raw amino-acid sequence, 340 residues long: uncharacterized protein (340 aa).

Its subcellular location is the virion. This is an uncharacterized protein from Acanthamoeba polyphaga (Amoeba).